The sequence spans 134 residues: Large ribosomal subunit protein uL16c (134 aa).

Belongs to the universal ribosomal protein uL16 family. As to quaternary structure, part of the 50S ribosomal subunit.

The protein localises to the plastid. The protein resides in the chloroplast. In Pinus koraiensis (Korean pine), this protein is Large ribosomal subunit protein uL16c.